The following is a 127-amino-acid chain: Ribonuclease P protein component 1 (127 aa).

The protein belongs to the eukaryotic/archaeal RNase P protein component 1 family. As to quaternary structure, consists of a catalytic RNA component and at least 4-5 protein subunits.

The protein resides in the cytoplasm. It carries out the reaction Endonucleolytic cleavage of RNA, removing 5'-extranucleotides from tRNA precursor.. Functionally, part of ribonuclease P, a protein complex that generates mature tRNA molecules by cleaving their 5'-ends. In Pyrococcus abyssi (strain GE5 / Orsay), this protein is Ribonuclease P protein component 1.